Here is a 347-residue protein sequence, read N- to C-terminus: Heme A synthase (347 aa).

The next 8 membrane-spanning stretches (helical) occupy residues Val14 to Ile34, Tyr95 to Phe115, Leu125 to Leu145, Leu166 to Leu186, Leu198 to Ala218, Phe260 to Leu280, Leu289 to Val309, and Ile311 to Leu331. His262 contributes to the heme binding site. His317 is a binding site for heme.

The protein belongs to the COX15/CtaA family. Type 2 subfamily. In terms of assembly, interacts with CtaB. It depends on heme b as a cofactor.

The protein localises to the cell membrane. It catalyses the reaction Fe(II)-heme o + 2 A + H2O = Fe(II)-heme a + 2 AH2. The protein operates within porphyrin-containing compound metabolism; heme A biosynthesis; heme A from heme O: step 1/1. Functionally, catalyzes the conversion of heme O to heme A by two successive hydroxylations of the methyl group at C8. The first hydroxylation forms heme I, the second hydroxylation results in an unstable dihydroxymethyl group, which spontaneously dehydrates, resulting in the formyl group of heme A. The chain is Heme A synthase from Ehrlichia canis (strain Jake).